The sequence spans 150 residues: MKIILKQDVAKLGKRFDVVEVKDGFAIHFLFPKKLAAPLTKKAIANRDLFLKQQQEQYQKNRALAEKLKLVIEQTPLTFQLKQHDGKPYGSIITKQIINLAKQQRLDLQRFMFKDNVRLQFGEHKLILHLFEEITATLTVIVNPENGTTN.

Belongs to the bacterial ribosomal protein bL9 family.

In terms of biological role, binds to the 23S rRNA. The protein is Large ribosomal subunit protein bL9 of Mycoplasma genitalium (strain ATCC 33530 / DSM 19775 / NCTC 10195 / G37) (Mycoplasmoides genitalium).